The primary structure comprises 722 residues: Metal transporter cnnm-5 (722 aa).

The signal sequence occupies residues 1-17 (MSLFLFAIFQLALGSPG). At 18–139 (APNGPNVPLQ…AAAAKYMGDE (122 aa)) the chain is on the extracellular side. N-linked (GlcNAc...) asparagine glycans are attached at residues Asn-102 and Asn-114. One can recognise a CNNM transmembrane domain in the interval 132–318 (AAKYMGDEIV…AQNEREKTIL (187 aa)). The chain crosses the membrane as a helical span at residues 140 to 160 (IVFCFFCILMSAYASGMTLGY). Over 161–196 (MKFSMIDLNTMLKIAEGDAAKKRVRRIMHFRRRSTQ) the chain is Cytoplasmic. Residues 197–217 (LVVTFSLFSSVFTVLFTTTCE) traverse the membrane as a helical segment. At 218–227 (KMLHGVSNED) the chain is on the extracellular side. The helical transmembrane segment at 228–248 (VLKMAVPALICLIFAEMIPQA) threads the bilayer. The Cytoplasmic segment spans residues 249–257 (VCNSKFGFN). Residues 258-278 (LAASLWFVTVIIFFVTLPIAY) traverse the membrane as a helical segment. At 279-722 (PASLVLGRFL…ETTPFMEKQE (444 aa)) the chain is on the extracellular side. 3 N-linked (GlcNAc...) asparagine glycosylation sites follow: Asn-320, Asn-349, and Asn-371. 2 consecutive CBS domains span residues 333 to 396 (MVPI…LIDE) and 413 to 473 (TVKF…KIDE). Positions 584–607 (SQRSSSTVNSQQHRQQTTDNSRST) are disordered. Residue Asn-639 is glycosylated (N-linked (GlcNAc...) asparagine). Residues 686 to 722 (LNSRASTSTSTTPACRTPLSVDARSQDETTPFMEKQE) are disordered. Residues 688–703 (SRASTSTSTTPACRTP) show a composition bias toward low complexity.

The protein belongs to the ACDP family.

It is found in the cell membrane. In terms of biological role, probable metal transporter. Probably acts redundantly with the other metal transport proteins cnnm-1, cnnm-2, cnnm-3 and cnnm-4 to regulate Mg(2+) homeostasis. This Caenorhabditis elegans protein is Metal transporter cnnm-5.